A 113-amino-acid polypeptide reads, in one-letter code: Large ribosomal subunit protein uL22 (113 aa).

It belongs to the universal ribosomal protein uL22 family. As to quaternary structure, part of the 50S ribosomal subunit.

In terms of biological role, this protein binds specifically to 23S rRNA; its binding is stimulated by other ribosomal proteins, e.g. L4, L17, and L20. It is important during the early stages of 50S assembly. It makes multiple contacts with different domains of the 23S rRNA in the assembled 50S subunit and ribosome. Its function is as follows. The globular domain of the protein is located near the polypeptide exit tunnel on the outside of the subunit, while an extended beta-hairpin is found that lines the wall of the exit tunnel in the center of the 70S ribosome. The polypeptide is Large ribosomal subunit protein uL22 (Bacillus pumilus (strain SAFR-032)).